Here is a 108-residue protein sequence, read N- to C-terminus: Thioredoxin (108 aa).

A Thioredoxin domain is found at 2-108 (NKIIELTDQN…LKDFLDENIK (107 aa)). Cys-32 and Cys-35 are joined by a disulfide.

Belongs to the thioredoxin family.

Participates in various redox reactions through the reversible oxidation of its active center dithiol to a disulfide and catalyzes dithiol-disulfide exchange reactions. The protein is Thioredoxin (trxA) of Buchnera aphidicola subsp. Schizaphis graminum (strain Sg).